Here is a 644-residue protein sequence, read N- to C-terminus: Subversion of eukaryotic traffic protein A (644 aa).

The glucosyltransferase stretch occupies residues 1 to 400 (MYKIYSYLGW…FHTLLSQVSD (400 aa)). Residues 401-644 (PVNPTAHELK…EYDNNHGLRI (244 aa)) are ptdIns(3)P-binding and localization domain.

In terms of processing, ubiquitinated and polyubiquitinated when ectopically produced in both yeast and mammalian cells; however it is unsure if this modification occurs during the L.pneumophila infection of host cells.

It is found in the secreted. Functionally, secreted effector that interferes with vesicular trafficking of host cells. Possesses glucohydrolase and mono-O-glucosyltransferase activity by using UDP-glucose as a sugar donor substrate. Is able to glucosylate histones H4 and H3.1 in vitro, but it is unlikely that histones are the natural substrates for SetA. May glycosylate a component of the host cell vesicle trafficking machinery during L.pneumophila infection. Binds with high specificity to phosphatidylinositol 3-phosphate (PtdIns(3)P), (with a dissociation constant value of 809 nM), which guides SetA to the cytosolic leaflet of the early phagosome of the host cell. The polypeptide is Subversion of eukaryotic traffic protein A (setA) (Legionella pneumophila subsp. pneumophila (strain Philadelphia 1 / ATCC 33152 / DSM 7513)).